The following is a 368-amino-acid chain: Probable deoxyhypusine synthase (368 aa).

NAD(+)-binding positions include 100–104 (SNLVS), 126–128 (TAG), Glu-132, and Asp-233. Residue 131–132 (EE) participates in spermidine binding. Asp-238 provides a ligand contact to spermidine. An NAD(+)-binding site is contributed by Gly-278. His-283 lines the spermidine pocket. An NAD(+)-binding site is contributed by 303–304 (TA). Spermidine is bound by residues 309–311 (GSD) and 318–324 (EAISWGK). The active-site Nucleophile is the Lys-324. 337–338 (EA) is a binding site for NAD(+).

Belongs to the deoxyhypusine synthase family. Requires NAD(+) as cofactor.

The catalysed reaction is [eIF5A protein]-L-lysine + spermidine = [eIF5A protein]-deoxyhypusine + propane-1,3-diamine. The protein operates within protein modification; eIF5A hypusination. Its function is as follows. Catalyzes the NAD-dependent oxidative cleavage of spermidine and the subsequent transfer of the butylamine moiety of spermidine to the epsilon-amino group of a specific lysine residue of the eIF-5A precursor protein to form the intermediate deoxyhypusine residue. The protein is Probable deoxyhypusine synthase of Drosophila melanogaster (Fruit fly).